The primary structure comprises 491 residues: Protein SET DOMAIN GROUP 40 (491 aa).

An SET domain is found at 36-278; the sequence is HSLSVSDFPD…LGEQVLLCYG (243 aa).

The protein belongs to the class V-like SAM-binding methyltransferase superfamily.

This is Protein SET DOMAIN GROUP 40 (SDG40) from Arabidopsis thaliana (Mouse-ear cress).